The sequence spans 294 residues: Probable 2-(5''-triphosphoribosyl)-3'-dephosphocoenzyme-A synthase (294 aa).

It belongs to the CitG/MdcB family.

The catalysed reaction is 3'-dephospho-CoA + ATP = 2'-(5''-triphospho-alpha-D-ribosyl)-3'-dephospho-CoA + adenine. The chain is Probable 2-(5''-triphosphoribosyl)-3'-dephosphocoenzyme-A synthase from Streptococcus equi subsp. zooepidemicus (strain H70).